Reading from the N-terminus, the 183-residue chain is MKLQERLGGANIYLVGMMGAGKTTTGRLLAQRLGYSFVDTDAVITAFRQRPIREIFAQEGEPAFRELEQQVLAQVSSYHHLVVATGGGIVLNPMNWSYLHHGIVVWLHVPLAVLCQRLRQDRERPLLQEQPLEERLGELLQARQHLYAQADLELRITLEDTPETVCDRLLETLPCILKPMEPC.

ATP is bound at residue 19-24 (GAGKTT). Thr23 is a Mg(2+) binding site. Substrate contacts are provided by Asp41, Arg65, and Gly87. Arg124 contacts ATP. Position 143 (Arg143) interacts with substrate.

It belongs to the shikimate kinase family. In terms of assembly, monomer. Requires Mg(2+) as cofactor.

The protein resides in the cytoplasm. The catalysed reaction is shikimate + ATP = 3-phosphoshikimate + ADP + H(+). Its pathway is metabolic intermediate biosynthesis; chorismate biosynthesis; chorismate from D-erythrose 4-phosphate and phosphoenolpyruvate: step 5/7. Its function is as follows. Catalyzes the specific phosphorylation of the 3-hydroxyl group of shikimic acid using ATP as a cosubstrate. The chain is Shikimate kinase from Thermosynechococcus vestitus (strain NIES-2133 / IAM M-273 / BP-1).